The following is a 117-amino-acid chain: UPF0102 protein Spro_4337 (117 aa).

It belongs to the UPF0102 family.

This Serratia proteamaculans (strain 568) protein is UPF0102 protein Spro_4337.